The chain runs to 207 residues: DNA protection during starvation protein 1 (207 aa).

Positions 1 to 12 (MTKKSTKSEAAS) are enriched in basic and acidic residues. Residues 1–31 (MTKKSTKSEAASKTKKSGVPETGAQGVRAGG) are disordered. Fe cation-binding residues include His-83, Asp-110, and Glu-114.

It belongs to the Dps family. As to quaternary structure, the 12 subunits form a hollow sphere into which the mineral iron core of up to 500 Fe(3+) can be deposited. The homododecameric forms at higher concentration of salt, the homodimeric form under reducing, low-salt conditions. The assembly of the dodecamer is irreversible.

The protein localises to the cytoplasm. It is found in the nucleoid. The catalysed reaction is 2 Fe(2+) + H2O2 + 2 H(+) = 2 Fe(3+) + 2 H2O. In terms of biological role, protects DNA from oxidative damage by sequestering intracellular Fe(2+) ion and storing it in the form of Fe(3+) oxyhydroxide mineral. One hydrogen peroxide oxidizes two Fe(2+) ions, which prevents hydroxyl radical production by the Fenton reaction. Both oligomeric forms of dps exhibit ferroxidase activity and DNA binding. Dodecameric dps is capable of Fe(2+) oxidation/mineralization. Only dimeric dps affords efficient DNA protection against hydroxyl radical-mediated cleavage. The polypeptide is DNA protection during starvation protein 1 (dps1) (Deinococcus radiodurans (strain ATCC 13939 / DSM 20539 / JCM 16871 / CCUG 27074 / LMG 4051 / NBRC 15346 / NCIMB 9279 / VKM B-1422 / R1)).